Reading from the N-terminus, the 346-residue chain is N-acetyl-gamma-glutamyl-phosphate reductase (346 aa).

Cys-150 is an active-site residue.

Belongs to the NAGSA dehydrogenase family. Type 1 subfamily.

The protein localises to the cytoplasm. It carries out the reaction N-acetyl-L-glutamate 5-semialdehyde + phosphate + NADP(+) = N-acetyl-L-glutamyl 5-phosphate + NADPH + H(+). It participates in amino-acid biosynthesis; L-arginine biosynthesis; N(2)-acetyl-L-ornithine from L-glutamate: step 3/4. Functionally, catalyzes the NADPH-dependent reduction of N-acetyl-5-glutamyl phosphate to yield N-acetyl-L-glutamate 5-semialdehyde. This chain is N-acetyl-gamma-glutamyl-phosphate reductase, found in Moorella thermoacetica (strain ATCC 39073 / JCM 9320).